A 152-amino-acid chain; its full sequence is Transcription elongation factor Spt5 (152 aa).

A KOW domain is found at 98–127 (EGDLVEVVSGPFRGMQAQVVKVTEGKGEVV).

Belongs to the archaeal Spt5 family. As to quaternary structure, heterodimer composed of Spt4 and Spt5. Interacts with RNA polymerase (RNAP).

In terms of biological role, stimulates transcription elongation. The protein is Transcription elongation factor Spt5 of Acidianus ambivalens (Desulfurolobus ambivalens).